A 376-amino-acid chain; its full sequence is Queuine tRNA-ribosyltransferase (376 aa).

The Proton acceptor role is filled by D89. Substrate-binding positions include 89-93 (DSGGF), D143, Q187, and G214. Positions 245–251 (GVGKPQD) are RNA binding. Catalysis depends on D264, which acts as the Nucleophile. The tract at residues 269 to 273 (TRNAR) is RNA binding; important for wobble base 34 recognition. C302, C304, C307, and H333 together coordinate Zn(2+).

It belongs to the queuine tRNA-ribosyltransferase family. As to quaternary structure, homodimer. Within each dimer, one monomer is responsible for RNA recognition and catalysis, while the other monomer binds to the replacement base PreQ1. Zn(2+) is required as a cofactor.

It catalyses the reaction 7-aminomethyl-7-carbaguanine + guanosine(34) in tRNA = 7-aminomethyl-7-carbaguanosine(34) in tRNA + guanine. Its pathway is tRNA modification; tRNA-queuosine biosynthesis. Functionally, catalyzes the base-exchange of a guanine (G) residue with the queuine precursor 7-aminomethyl-7-deazaguanine (PreQ1) at position 34 (anticodon wobble position) in tRNAs with GU(N) anticodons (tRNA-Asp, -Asn, -His and -Tyr). Catalysis occurs through a double-displacement mechanism. The nucleophile active site attacks the C1' of nucleotide 34 to detach the guanine base from the RNA, forming a covalent enzyme-RNA intermediate. The proton acceptor active site deprotonates the incoming PreQ1, allowing a nucleophilic attack on the C1' of the ribose to form the product. After dissociation, two additional enzymatic reactions on the tRNA convert PreQ1 to queuine (Q), resulting in the hypermodified nucleoside queuosine (7-(((4,5-cis-dihydroxy-2-cyclopenten-1-yl)amino)methyl)-7-deazaguanosine). The polypeptide is Queuine tRNA-ribosyltransferase (Erwinia tasmaniensis (strain DSM 17950 / CFBP 7177 / CIP 109463 / NCPPB 4357 / Et1/99)).